Consider the following 517-residue polypeptide: Argininosuccinate lyase, chloroplastic (517 aa).

A chloroplast-targeting transit peptide spans 1–45 (MGAIDLSFSQSLLFSSSRSNLSSSTHRSVSFLPPGSKSRCLPPLR). 3 residues coordinate 2-(N(omega)-L-arginino)succinate: Ser79, Asn166, and Thr211. His212 functions as the Proton acceptor in the catalytic mechanism. Ser333 functions as the Proton donor in the catalytic mechanism. Residues Asn341, Tyr373, Gln378, and Lys381 each coordinate 2-(N(omega)-L-arginino)succinate.

It belongs to the lyase 1 family. Argininosuccinate lyase subfamily.

It is found in the plastid. It localises to the chloroplast. The enzyme catalyses 2-(N(omega)-L-arginino)succinate = fumarate + L-arginine. Its pathway is amino-acid biosynthesis; L-arginine biosynthesis; L-arginine from L-ornithine and carbamoyl phosphate: step 3/3. The protein is Argininosuccinate lyase, chloroplastic of Arabidopsis thaliana (Mouse-ear cress).